A 288-amino-acid chain; its full sequence is MKRTPHLLAIQSHVVFGHAGNSAAVFPMQRIGVNVWPLNTVQFSNHTQYKQWTGEVLAPQQIPALIDGIAAIGELGNCDAVLSGYLGSAAQGRAILSGVARIKAANPKALYLCDPVMGHPEKGCIVPPQVSDFLLEEAAAVADFMCPNQLELDSFSGRKPESLPDCLAMARALLARGPKAIVVKHLDYPGKAADGFEMLLVTAEASWHLRRPLLAFPRQPVGVGDLTSGLFLSRILLGDDLVAAFEFTAAAVHEVLLETQACGSYELELVRAQDRIAHPRVKFEAVRL.

Substrate is bound by residues serine 12 and 47–48 (TQ). Residues aspartate 114, glutamate 151, lysine 184, and 211–214 (RPLL) each bind ATP. Aspartate 225 contacts substrate.

It belongs to the pyridoxine kinase family. PdxY subfamily. In terms of assembly, homodimer. It depends on Mg(2+) as a cofactor.

It carries out the reaction pyridoxal + ATP = pyridoxal 5'-phosphate + ADP + H(+). It functions in the pathway cofactor metabolism; pyridoxal 5'-phosphate salvage; pyridoxal 5'-phosphate from pyridoxal: step 1/1. In terms of biological role, pyridoxal kinase involved in the salvage pathway of pyridoxal 5'-phosphate (PLP). Catalyzes the phosphorylation of pyridoxal to PLP. The polypeptide is Pyridoxal kinase PdxY (Pseudomonas syringae pv. tomato (strain ATCC BAA-871 / DC3000)).